Reading from the N-terminus, the 275-residue chain is MAIHLYKTSTPSTRNGAVDSQAKSTPQKQKSLIYGQHHCGKGRNARGVITTGHRGGGHKRLYRKINFRRNEKDISGRIVTIEYDPNRNAYICLIHYGDGEKRYILHPRGARIGDTIVSGTEVPISMGNALPLTDMSLGTAIHNIEITLGKGGQLARAAGTVAKLIAKEGKSATLRLPSGEVRLVSKNCSATVGQVGNVGVNQKSLGRAGSKCWLGKRPVVRGVVMNPVDHPHGGGEGRAPIGRKRPTTPWGYPALGRRSRKRNKYSDSFILRRRK.

2 disordered regions span residues 1-30 (MAIH…QKQK) and 225-275 (MNPV…RRRK). Positions 21 to 30 (QAKSTPQKQK) are enriched in polar residues.

Belongs to the universal ribosomal protein uL2 family. As to quaternary structure, part of the 50S ribosomal subunit.

The protein resides in the plastid. The protein localises to the chloroplast. This is Large ribosomal subunit protein uL2c (rpl2) from Illicium oligandrum (Star anise).